Consider the following 402-residue polypeptide: Zinc finger CCHC domain-containing protein 12 (402 aa).

Positions 1 to 20 are disordered; it reads MASILSRLGSSRGQNSPLPP. The segment at 346–363 adopts a CCHC-type zinc-finger fold; it reads IHCSHCGEEGHSKETCDN. A disordered region spans residues 383–402; sequence HAEERARGAPGEPIGLSEPQ.

Belongs to the ZCCHC12 family. Interacts with SMAD1 and CREB-binding protein (CBP). Forms a protein-DNA complex through its association with SMAD1. In embryonic brains expression is restricted to the ventral region of the forebrain, including the septum, amygdala, caudal putamen, and in the basal-forebrain cholinergic neurons. In adults, expressed in the brain, and at low levels in the testis.

Functionally, transcriptional coactivator in the bone morphogenetic protein (BMP)-signaling pathway. It positively modulates BMP signaling by interacting with SMAD1 and associating with CBP in the transcription complex. It contributes to the BMP-induced enhancement of cholinergic-neuron-specific gene expression. The sequence is that of Zinc finger CCHC domain-containing protein 12 (Zcchc12) from Mus musculus (Mouse).